A 632-amino-acid chain; its full sequence is Thioredoxin domain-containing protein C959.05c (632 aa).

The N-terminal stretch at 1–22 (MKLFLYHFTFIVYYFIISFSYA) is a signal peptide. N-linked (GlcNAc...) asparagine glycans are attached at residues N35, N41, and N140. The region spanning 153–284 (SDSSSTDPAF…LLSYSNQVAS (132 aa)) is the Thioredoxin domain. A disulfide bridge connects residues C209 and C212. N557 is a glycosylation site (N-linked (GlcNAc...) asparagine). A helical transmembrane segment spans residues 583–603 (LIVFNLLIALLILSILTIISA).

The protein belongs to the protein disulfide isomerase family.

Its subcellular location is the endoplasmic reticulum membrane. The enzyme catalyses Catalyzes the rearrangement of -S-S- bonds in proteins.. In terms of biological role, acts as a membrane-bound chaperone in endoplasmic reticulum quality control. Probably facilitates presentation of substrate to membrane-bound components of the degradation machinery. This chain is Thioredoxin domain-containing protein C959.05c, found in Schizosaccharomyces pombe (strain 972 / ATCC 24843) (Fission yeast).